Here is a 354-residue protein sequence, read N- to C-terminus: UDP-N-acetylglucosamine--N-acetylmuramyl-(pentapeptide) pyrophosphoryl-undecaprenol N-acetylglucosamine transferase (354 aa).

Residues 15–17 (TGG), Asn-127, Arg-163, Ser-191, Ile-242, 261–266 (ALTVSE), and Gln-286 contribute to the UDP-N-acetyl-alpha-D-glucosamine site.

This sequence belongs to the glycosyltransferase 28 family. MurG subfamily.

It localises to the cell inner membrane. The catalysed reaction is di-trans,octa-cis-undecaprenyl diphospho-N-acetyl-alpha-D-muramoyl-L-alanyl-D-glutamyl-meso-2,6-diaminopimeloyl-D-alanyl-D-alanine + UDP-N-acetyl-alpha-D-glucosamine = di-trans,octa-cis-undecaprenyl diphospho-[N-acetyl-alpha-D-glucosaminyl-(1-&gt;4)]-N-acetyl-alpha-D-muramoyl-L-alanyl-D-glutamyl-meso-2,6-diaminopimeloyl-D-alanyl-D-alanine + UDP + H(+). The protein operates within cell wall biogenesis; peptidoglycan biosynthesis. In terms of biological role, cell wall formation. Catalyzes the transfer of a GlcNAc subunit on undecaprenyl-pyrophosphoryl-MurNAc-pentapeptide (lipid intermediate I) to form undecaprenyl-pyrophosphoryl-MurNAc-(pentapeptide)GlcNAc (lipid intermediate II). The protein is UDP-N-acetylglucosamine--N-acetylmuramyl-(pentapeptide) pyrophosphoryl-undecaprenol N-acetylglucosamine transferase of Pasteurella multocida (strain Pm70).